The chain runs to 398 residues: 8-amino-7-oxononanoate synthase (398 aa).

Position 23 (R23) interacts with substrate. A pyridoxal 5'-phosphate-binding site is contributed by 110 to 111; the sequence is GY. Residue H135 coordinates substrate. Residues S181, H209, and T237 each coordinate pyridoxal 5'-phosphate. K240 carries the post-translational modification N6-(pyridoxal phosphate)lysine. Position 354 (T354) interacts with substrate.

The protein belongs to the class-II pyridoxal-phosphate-dependent aminotransferase family. BioF subfamily. As to quaternary structure, homodimer. It depends on pyridoxal 5'-phosphate as a cofactor.

It catalyses the reaction 6-carboxyhexanoyl-[ACP] + L-alanine + H(+) = (8S)-8-amino-7-oxononanoate + holo-[ACP] + CO2. Its pathway is cofactor biosynthesis; biotin biosynthesis. Functionally, catalyzes the decarboxylative condensation of pimeloyl-[acyl-carrier protein] and L-alanine to produce 8-amino-7-oxononanoate (AON), [acyl-carrier protein], and carbon dioxide. In Anaeromyxobacter dehalogenans (strain 2CP-1 / ATCC BAA-258), this protein is 8-amino-7-oxononanoate synthase.